We begin with the raw amino-acid sequence, 150 residues long: Ribosome maturation factor RimP (150 aa).

It belongs to the RimP family.

Its subcellular location is the cytoplasm. Required for maturation of 30S ribosomal subunits. The protein is Ribosome maturation factor RimP of Klebsiella pneumoniae (strain 342).